The following is a 376-amino-acid chain: N-acetyldiaminopimelate deacetylase (376 aa).

Residue Asp-69 is part of the active site. Catalysis depends on Glu-128, which acts as the Proton acceptor.

The protein belongs to the peptidase M20A family. N-acetyldiaminopimelate deacetylase subfamily.

The enzyme catalyses N-acetyl-(2S,6S)-2,6-diaminopimelate + H2O = (2S,6S)-2,6-diaminopimelate + acetate. It functions in the pathway amino-acid biosynthesis; L-lysine biosynthesis via DAP pathway; LL-2,6-diaminopimelate from (S)-tetrahydrodipicolinate (acetylase route): step 3/3. Its function is as follows. Catalyzes the conversion of N-acetyl-diaminopimelate to diaminopimelate and acetate. The protein is N-acetyldiaminopimelate deacetylase of Bacillus cytotoxicus (strain DSM 22905 / CIP 110041 / 391-98 / NVH 391-98).